A 199-amino-acid chain; its full sequence is Holliday junction branch migration complex subunit RuvA (199 aa).

The segment at 1–65 is domain I; sequence MIGWLHGQII…EDALLLYGFL (65 aa). The domain II stretch occupies residues 66–144; that stretch reads DKEERSLFRS…QFDGSVSDTF (79 aa). Residues 144–148 are flexible linker; the sequence is FQKQA. The interval 149-199 is domain III; sequence GSTHSQQEAISALEALGYKPQEAWKVMNKIDNGNKSCEQLIREALQILSSR.

It belongs to the RuvA family. Homotetramer. Forms an RuvA(8)-RuvB(12)-Holliday junction (HJ) complex. HJ DNA is sandwiched between 2 RuvA tetramers; dsDNA enters through RuvA and exits via RuvB. An RuvB hexamer assembles on each DNA strand where it exits the tetramer. Each RuvB hexamer is contacted by two RuvA subunits (via domain III) on 2 adjacent RuvB subunits; this complex drives branch migration. In the full resolvosome a probable DNA-RuvA(4)-RuvB(12)-RuvC(2) complex forms which resolves the HJ.

It is found in the cytoplasm. In terms of biological role, the RuvA-RuvB-RuvC complex processes Holliday junction (HJ) DNA during genetic recombination and DNA repair, while the RuvA-RuvB complex plays an important role in the rescue of blocked DNA replication forks via replication fork reversal (RFR). RuvA specifically binds to HJ cruciform DNA, conferring on it an open structure. The RuvB hexamer acts as an ATP-dependent pump, pulling dsDNA into and through the RuvAB complex. HJ branch migration allows RuvC to scan DNA until it finds its consensus sequence, where it cleaves and resolves the cruciform DNA. In Legionella pneumophila subsp. pneumophila (strain Philadelphia 1 / ATCC 33152 / DSM 7513), this protein is Holliday junction branch migration complex subunit RuvA.